The primary structure comprises 123 residues: UPF0231 protein plu3616 (123 aa).

Belongs to the UPF0231 family.

In Photorhabdus laumondii subsp. laumondii (strain DSM 15139 / CIP 105565 / TT01) (Photorhabdus luminescens subsp. laumondii), this protein is UPF0231 protein plu3616.